Consider the following 356-residue polypeptide: Cell division protein ZipA (356 aa).

Topologically, residues 1-6 are periplasmic; that stretch reads MEDLQL. The helical transmembrane segment at 7 to 27 threads the bilayer; sequence VLFVLGAIAIVAVLVHGFWSI. Residues 28 to 356 lie on the Cytoplasmic side of the membrane; the sequence is RRQQPKSLKD…DYLHRIRANA (329 aa). The segment at 132–155 is disordered; sequence PAQPDFSLQPPVAKEQHRGPKVSR.

It belongs to the ZipA family. In terms of assembly, interacts with FtsZ via their C-terminal domains.

Its subcellular location is the cell inner membrane. Its function is as follows. Essential cell division protein that stabilizes the FtsZ protofilaments by cross-linking them and that serves as a cytoplasmic membrane anchor for the Z ring. Also required for the recruitment to the septal ring of downstream cell division proteins. The protein is Cell division protein ZipA of Shewanella baltica (strain OS185).